The sequence spans 431 residues: Tol-Pal system protein TolB (431 aa).

The first 26 residues, Met-1–Ala-26, serve as a signal peptide directing secretion. The disordered stretch occupies residues Pro-411–Gln-431.

It belongs to the TolB family. The Tol-Pal system is composed of five core proteins: the inner membrane proteins TolA, TolQ and TolR, the periplasmic protein TolB and the outer membrane protein Pal. They form a network linking the inner and outer membranes and the peptidoglycan layer.

The protein resides in the periplasm. Functionally, part of the Tol-Pal system, which plays a role in outer membrane invagination during cell division and is important for maintaining outer membrane integrity. The chain is Tol-Pal system protein TolB from Burkholderia lata (strain ATCC 17760 / DSM 23089 / LMG 22485 / NCIMB 9086 / R18194 / 383).